Consider the following 558-residue polypeptide: CTP synthase (558 aa).

Residues 1-266 (MSAKYIFVTG…DRLVMKYLRL (266 aa)) are amidoligase domain. Position 14 (serine 14) interacts with CTP. Serine 14 contributes to the UTP binding site. ATP-binding positions include 15-20 (SLGKGL) and aspartate 72. Aspartate 72 and glutamate 140 together coordinate Mg(2+). CTP contacts are provided by residues 147–149 (DIE), 187–192 (KTKPTQ), and lysine 223. Residues 187 to 192 (KTKPTQ) and lysine 223 each bind UTP. Residue 239–241 (KDV) participates in ATP binding. The Glutamine amidotransferase type-1 domain occupies 291 to 537 (IIGIIGKYVE…IGASYEHRMK (247 aa)). Position 355 (glycine 355) interacts with L-glutamine. The active-site Nucleophile; for glutamine hydrolysis is the cysteine 382. L-glutamine-binding positions include 383 to 386 (LGMQ), glutamate 406, and arginine 463. Residues histidine 510 and glutamate 512 contribute to the active site. Residues 539-558 (THTKEREEESVFLRPERVGK) form a disordered region. Basic and acidic residues predominate over residues 542–558 (KEREEESVFLRPERVGK).

The protein belongs to the CTP synthase family. Homotetramer.

The enzyme catalyses UTP + L-glutamine + ATP + H2O = CTP + L-glutamate + ADP + phosphate + 2 H(+). It carries out the reaction L-glutamine + H2O = L-glutamate + NH4(+). It catalyses the reaction UTP + NH4(+) + ATP = CTP + ADP + phosphate + 2 H(+). The protein operates within pyrimidine metabolism; CTP biosynthesis via de novo pathway; CTP from UDP: step 2/2. Its activity is regulated as follows. Allosterically activated by GTP, when glutamine is the substrate; GTP has no effect on the reaction when ammonia is the substrate. The allosteric effector GTP functions by stabilizing the protein conformation that binds the tetrahedral intermediate(s) formed during glutamine hydrolysis. Inhibited by the product CTP, via allosteric rather than competitive inhibition. In terms of biological role, catalyzes the ATP-dependent amination of UTP to CTP with either L-glutamine or ammonia as the source of nitrogen. Regulates intracellular CTP levels through interactions with the four ribonucleotide triphosphates. In Koribacter versatilis (strain Ellin345), this protein is CTP synthase.